A 372-amino-acid chain; its full sequence is ATP phosphoribosyltransferase regulatory subunit (372 aa).

The protein belongs to the class-II aminoacyl-tRNA synthetase family. HisZ subfamily. In terms of assembly, heteromultimer composed of HisG and HisZ subunits.

The protein resides in the cytoplasm. It functions in the pathway amino-acid biosynthesis; L-histidine biosynthesis; L-histidine from 5-phospho-alpha-D-ribose 1-diphosphate: step 1/9. Required for the first step of histidine biosynthesis. May allow the feedback regulation of ATP phosphoribosyltransferase activity by histidine. This Rhizobium rhizogenes (strain K84 / ATCC BAA-868) (Agrobacterium radiobacter) protein is ATP phosphoribosyltransferase regulatory subunit.